Here is a 400-residue protein sequence, read N- to C-terminus: Dual specificity mitogen-activated protein kinase kinase 2 (400 aa).

Met-1 is modified (N-acetylmethionine). At Ser-23 the chain carries Phosphoserine. Residues 72–369 (FERISELGAG…LKMLMSHTFI (298 aa)) enclose the Protein kinase domain. ATP is bound by residues 78–86 (LGAGNGGVV) and Lys-101. The Proton acceptor role is filled by Asp-194. Ser-222 carries the post-translational modification Phosphoserine; by RAF. A phosphoserine mark is found at Ser-226, Ser-293, Ser-295, and Ser-306. The disordered stretch occupies residues 288–309 (EGEPHSISPRPRPPGRPISGHG). Thr-394 and Thr-396 each carry phosphothreonine.

It belongs to the protein kinase superfamily. STE Ser/Thr protein kinase family. MAP kinase kinase subfamily. Interacts with MORG1. Interacts with SGK1. Interacts with KSR1. Interacts with KSR1 and BRAF; the interaction with KSR1 mediates KSR1-BRAF dimerization. Interacts with GLS. Mg(2+) is required as a cofactor. MAPKK is itself dependent on Ser/Thr phosphorylation for activity catalyzed by MAP kinase kinase kinases (RAF or MEKK1).

It is found in the cytoplasm. The protein localises to the membrane. The enzyme catalyses L-seryl-[protein] + ATP = O-phospho-L-seryl-[protein] + ADP + H(+). The catalysed reaction is L-threonyl-[protein] + ATP = O-phospho-L-threonyl-[protein] + ADP + H(+). It carries out the reaction L-tyrosyl-[protein] + ATP = O-phospho-L-tyrosyl-[protein] + ADP + H(+). Functionally, catalyzes the concomitant phosphorylation of a threonine and a tyrosine residue in a Thr-Glu-Tyr sequence located in MAP kinases. Activates the ERK1 and ERK2 MAP kinases. Activates BRAF in a KSR1 or KSR2-dependent manner; by binding to KSR1 or KSR2 releases the inhibitory intramolecular interaction between KSR1 or KSR2 protein kinase and N-terminal domains which promotes KSR1 or KSR2-BRAF dimerization and BRAF activation. This chain is Dual specificity mitogen-activated protein kinase kinase 2 (MAP2K2), found in Canis lupus familiaris (Dog).